Consider the following 250-residue polypeptide: Sperm-egg fusion protein Juno (250 aa).

Residues 1-19 form the signal peptide; the sequence is MACWWPLLLELWTVMPTWA. Disulfide bonds link Cys27/Cys55, Cys47/Cys95, Cys56/Cys99, Cys79/Cys172, Cys86/Cys143, Cys132/Cys206, Cys136/Cys186, and Cys149/Cys166. Positions 62–81 are important for interaction with IZUMO1; sequence WEAHLDVSPLYNFSLFHCGL. Asn73 is a glycosylation site (N-linked (GlcNAc...) asparagine). Ser228 carries GPI-anchor amidated serine lipidation. The propeptide occupies 229-250; that stretch reads SAPSWELSYTIMVCSLFLPFLS.

The protein belongs to the folate receptor family. In terms of assembly, monomer. Interacts with IZUMO1; the interaction is direct. IZUMO1 and IZUMO1R/JUNO form a complex with 1:1 stoichiometry. Interacts with FCRL3/MAIA; FCRL3/MAIA replaces IZUMO1R/JUNO as IZUMO1 receptor after sperm-egg adhesion, thereby permitting species-specific gamete fusion. Interacts with WDR54. In terms of processing, the protein is rapidly cleaved following fertilization, being only weakly detectable in zona-intact fertilized eggs at telophase II and undetectable at the pronuclear stage. Sheding is probably required to block to polyspermy and ensuring egg fusion with a single sperm. As to expression, expressed in unfertilized oocytes (at protein level).

Its subcellular location is the cell membrane. It is found in the cell projection. It localises to the microvillus membrane. In terms of biological role, receptor for IZUMO1 present at the cell surface of oocytes (oolemma), which is essential for species-specific gamete recognition and fertilization. The IZUMO1:IZUMO1R/JUNO interaction is a necessary adhesion event between sperm and egg that is required for fertilization but is not sufficient for cell fusion. The ligand-receptor interaction probably does not act as a membrane 'fusogen'. Does not bind folate. The chain is Sperm-egg fusion protein Juno from Homo sapiens (Human).